We begin with the raw amino-acid sequence, 248 residues long: Zinc finger CCCH domain-containing protein 36 (248 aa).

Disordered stretches follow at residues methionine 1–serine 37 and methionine 87–phenylalanine 110. The C3H1-type 1 zinc-finger motif lies at glycine 36–proline 64. Over residues serine 90 to glycine 103 the composition is skewed to gly residues. The region spanning serine 113–valine 177 is the KH domain. Positions alanine 188–histidine 209 are disordered. Gly residues predominate over residues proline 192–serine 204. The C3H1-type 2 zinc-finger motif lies at asparagine 213–alanine 240.

This is Zinc finger CCCH domain-containing protein 36 from Arabidopsis thaliana (Mouse-ear cress).